Consider the following 318-residue polypeptide: Homoserine kinase (318 aa).

97–107 contributes to the ATP binding site; it reads PIGSGLGSSAC.

Belongs to the GHMP kinase family. Homoserine kinase subfamily.

Its subcellular location is the cytoplasm. The catalysed reaction is L-homoserine + ATP = O-phospho-L-homoserine + ADP + H(+). The protein operates within amino-acid biosynthesis; L-threonine biosynthesis; L-threonine from L-aspartate: step 4/5. Catalyzes the ATP-dependent phosphorylation of L-homoserine to L-homoserine phosphate. The polypeptide is Homoserine kinase (Aliivibrio fischeri (strain MJ11) (Vibrio fischeri)).